The following is a 155-amino-acid chain: Antitoxin HicB 1 (155 aa).

Positions 99–153 (MLNAFLDSKLTQIELANRMGVKKQEVTRIFDLRHSTKIDTVGKVASAIGHQLTLS) constitute an HTH cro/C1-type domain. The segment at residues 110-129 (QIELANRMGVKKQEVTRIFD) is a DNA-binding region (H-T-H motif).

The protein belongs to the HicB antitoxin family. As to quaternary structure, probably forms a complex with the probable mRNA interferase HicA1 (its cognate toxin); when complexed with HicA 1 inhibits the toxin activity.

Functionally, antitoxin component of a type II toxin-antitoxin (TA) system. Functions as an mRNA interferase antitoxin preventing effects of the HicA 1 toxin. The polypeptide is Antitoxin HicB 1 (hicB1) (Photorhabdus laumondii subsp. laumondii (strain DSM 15139 / CIP 105565 / TT01) (Photorhabdus luminescens subsp. laumondii)).